The following is a 1310-amino-acid chain: Vacuolating cytotoxin autotransporter (1310 aa).

The signal sequence occupies residues M1–A30. Positions P339–I364 are disordered. Over residues N350–I364 the composition is skewed to polar residues. Positions K1038–F1310 constitute an Autotransporter domain.

It localises to the periplasm. The protein localises to the secreted. It is found in the cell surface. The protein resides in the cell outer membrane. Induces vacuolation of eukaryotic cells. Causes ulceration and gastric lesions. This Helicobacter pylori (Campylobacter pylori) protein is Vacuolating cytotoxin autotransporter (vacA).